Here is a 418-residue protein sequence, read N- to C-terminus: D-inositol 3-phosphate glycosyltransferase 1 (418 aa).

Residues 24-25 and Gly-32 contribute to the UDP-N-acetyl-alpha-D-glucosamine site; that span reads QP. 1D-myo-inositol 3-phosphate contacts are provided by residues 29-34, Lys-87, His-115, Ser-139, and Gln-159; that span reads DAGGLN. The UDP-N-acetyl-alpha-D-glucosamine site is built by Arg-233 and Lys-238. Residues Tyr-308, Arg-309, and Ala-311 each contribute to the Mg(2+) site. UDP-N-acetyl-alpha-D-glucosamine is bound by residues Glu-321 and Glu-329. Thr-335 is a binding site for Mg(2+).

The protein belongs to the glycosyltransferase group 1 family. MshA subfamily. Homodimer.

The catalysed reaction is 1D-myo-inositol 3-phosphate + UDP-N-acetyl-alpha-D-glucosamine = 1D-myo-inositol 2-acetamido-2-deoxy-alpha-D-glucopyranoside 3-phosphate + UDP + H(+). Functionally, catalyzes the transfer of a N-acetyl-glucosamine moiety to 1D-myo-inositol 3-phosphate to produce 1D-myo-inositol 2-acetamido-2-deoxy-glucopyranoside 3-phosphate in the mycothiol biosynthesis pathway. This chain is D-inositol 3-phosphate glycosyltransferase 1, found in Catenulispora acidiphila (strain DSM 44928 / JCM 14897 / NBRC 102108 / NRRL B-24433 / ID139908).